The primary structure comprises 239 residues: Pyridoxine 5'-phosphate synthase (239 aa).

Asn7 contacts 3-amino-2-oxopropyl phosphate. 9–10 (DH) contacts 1-deoxy-D-xylulose 5-phosphate. Arg18 serves as a coordination point for 3-amino-2-oxopropyl phosphate. The active-site Proton acceptor is the His43. 1-deoxy-D-xylulose 5-phosphate is bound by residues Arg45 and His50. Glu70 acts as the Proton acceptor in catalysis. Residue Thr100 participates in 1-deoxy-D-xylulose 5-phosphate binding. His191 (proton donor) is an active-site residue. Residues Gly192 and 213–214 (GH) each bind 3-amino-2-oxopropyl phosphate.

It belongs to the PNP synthase family. Homooctamer; tetramer of dimers.

It is found in the cytoplasm. The catalysed reaction is 3-amino-2-oxopropyl phosphate + 1-deoxy-D-xylulose 5-phosphate = pyridoxine 5'-phosphate + phosphate + 2 H2O + H(+). Its pathway is cofactor biosynthesis; pyridoxine 5'-phosphate biosynthesis; pyridoxine 5'-phosphate from D-erythrose 4-phosphate: step 5/5. Its function is as follows. Catalyzes the complicated ring closure reaction between the two acyclic compounds 1-deoxy-D-xylulose-5-phosphate (DXP) and 3-amino-2-oxopropyl phosphate (1-amino-acetone-3-phosphate or AAP) to form pyridoxine 5'-phosphate (PNP) and inorganic phosphate. The protein is Pyridoxine 5'-phosphate synthase of Syntrophotalea carbinolica (strain DSM 2380 / NBRC 103641 / GraBd1) (Pelobacter carbinolicus).